A 146-amino-acid chain; its full sequence is Hut operon positive regulatory protein (146 aa).

It belongs to the HutP family. Homohexamer.

Functionally, antiterminator that binds to cis-acting regulatory sequences on the mRNA in the presence of histidine, thereby suppressing transcription termination and activating the hut operon for histidine utilization. In Bacillus cereus (strain ZK / E33L), this protein is Hut operon positive regulatory protein.